The primary structure comprises 221 residues: Nuclear phosphoprotein UL3 homolog (221 aa).

Belongs to the alphaherpesvirinae HHV-1 UL3 family. In terms of processing, phosphorylated.

The protein localises to the host nucleus. The protein is Nuclear phosphoprotein UL3 homolog of Varicella-zoster virus (strain Oka vaccine) (HHV-3).